Reading from the N-terminus, the 295-residue chain is Protein PHR1-LIKE 2 (295 aa).

Positions 38-98 (TDPKPRLRWT…HLQKFRLGRQ (61 aa)) constitute an HTH myb-type domain. Residues 69 to 94 (PKTIMRTMGVKGLTLYHLKSHLQKFR) constitute a DNA-binding region (H-T-H motif). The interval 96–138 (GRQAGKESTENSKDASCVGESQDTGSSSTSSMRMAQQEQNEGY) is disordered. A compositionally biased stretch (basic and acidic residues) spans 99 to 108 (AGKESTENSK). A compositionally biased stretch (polar residues) spans 127–138 (MRMAQQEQNEGY). Positions 141-161 (TEALRAQMEVQRRLHDQLEVQ) form a coiled coil. Residues 154-159 (LHDQLE) carry the LHEQLE motif.

This sequence belongs to the MYB-CC family. In terms of assembly, homo- and heterodimers. Interacts with PHL3, but not with PHR1.

It is found in the nucleus. Functionally, transcriptional activator. Acts redundantly with PHR1 as a key component of the central regulatory system controlling transcriptional responses to Pi starvation. Binds in a sequence-specific manner to phosphate starvation-regulated promoters. In Arabidopsis thaliana (Mouse-ear cress), this protein is Protein PHR1-LIKE 2.